Consider the following 176-residue polypeptide: NAD(P)H-quinone oxidoreductase subunit 6, chloroplastic (176 aa).

The next 5 membrane-spanning stretches (helical) occupy residues Phe-10–Pro-30, Pro-32–Leu-52, Ala-61–Met-81, Leu-92–Met-112, and Phe-152–Ser-172.

This sequence belongs to the complex I subunit 6 family. As to quaternary structure, NDH is composed of at least 16 different subunits, 5 of which are encoded in the nucleus.

It is found in the plastid. The protein resides in the chloroplast thylakoid membrane. It catalyses the reaction a plastoquinone + NADH + (n+1) H(+)(in) = a plastoquinol + NAD(+) + n H(+)(out). The enzyme catalyses a plastoquinone + NADPH + (n+1) H(+)(in) = a plastoquinol + NADP(+) + n H(+)(out). NDH shuttles electrons from NAD(P)H:plastoquinone, via FMN and iron-sulfur (Fe-S) centers, to quinones in the photosynthetic chain and possibly in a chloroplast respiratory chain. The immediate electron acceptor for the enzyme in this species is believed to be plastoquinone. Couples the redox reaction to proton translocation, and thus conserves the redox energy in a proton gradient. This is NAD(P)H-quinone oxidoreductase subunit 6, chloroplastic (ndhG) from Arabidopsis thaliana (Mouse-ear cress).